The chain runs to 140 residues: uncharacterized protein (140 aa).

This is an uncharacterized protein from Acholeplasma phage L2 (Bacteriophage L2).